The sequence spans 394 residues: MKQLKPNSKYLLYGQALSFMGDYCVLPALLILSTYYHDYWVTSGVIVVRSIPMVFQPFLGVLVDRLDRIKIMLWTDIIRGIIFLGLTFLPKGEYPLIFLALLFITYGSGVFFNPARLAVMSSLESDIKSINTLFAKATTISIIVGAAAGGLFLLGGSVELAVAFNGVTYLVSAFFISRIKLQFVPIQSENIKEAFQSFKEGLKEIKTNSFVLNAMFTMITMALLWGVVYSYFPIVSRFLGDGEIGNFILTFCIGFGGFIGAALVSKWGFNNNRGLTYFTVLSIVSLALFLFTPIFAVSVIAAILFFIAMEYGEVLAKVKVQENAANQIQGRIFSVAEASIGLCISIGSMFINILSAPVIMGLIVVIVCGLFLHTKLVNKSFLERDNKTEQKGVF.

The next 11 helical transmembrane spans lie at 11-31 (LLYG…ALLI), 43-63 (SGVI…GVLV), 69-89 (IKIM…LTFL), 92-112 (GEYP…GVFF), 142-162 (IIVG…ELAV), 166-186 (GVTY…FVPI), 215-235 (MFTM…FPIV), 244-264 (IGNF…AALV), 288-308 (LFLF…FFIA), 332-352 (IFSV…MFIN), and 353-373 (ILSA…LFLH).

Belongs to the major facilitator superfamily. Drug:H(+) antiporter-3 (DHA3) (TC 2.A.1.21) family.

It is found in the cell membrane. In terms of biological role, part of the bacilysin biosynthesis operon. May be involved in self-resistance to bacilysin by permitting efflux of this antibiotic. In Bacillus subtilis (strain 168), this protein is Putative bacilysin exporter BacE (bacE).